A 268-amino-acid chain; its full sequence is N-formylmaleamate deformylase (268 aa).

The 224-residue stretch at 28–251 folds into the AB hydrolase-1 domain; sequence ALILVPGITS…NAGHMIPWDD (224 aa). Residues serine 101, glutamate 221, and histidine 245 each act as charge relay system in the active site.

It carries out the reaction N-formylmaleamate + H2O = maleamate + formate + H(+). Its pathway is cofactor degradation; nicotinate degradation. In terms of biological role, deformylase that catalyzes the conversion of N-formylmaleamic acid to maleamate in the aerobic nicotinate degradation pathway. This chain is N-formylmaleamate deformylase (nicD), found in Pseudomonas putida (strain ATCC 47054 / DSM 6125 / CFBP 8728 / NCIMB 11950 / KT2440).